We begin with the raw amino-acid sequence, 297 residues long: MEDFEKIEKIGEGTYGVVYKGRNRLTGQIVAMKKIRLESDDEGVPSTAIREISLLKELKHENIVCLEDVLMEENRIYLIFEFLSMDLKKYMDSLPVDKHMESELVRSYLYQITSAILFCHRRRVLHRDLKPQNLLIDKSGLIKVADFGLGRSFGIPVRIYTHEIVTLWYRAPEVLLGSPRYSCPVDIWSIGCIFAEMATRKPLFQGDSEIDQLFRMFRILKTPTEDIWPGVTSLPDYKNTFPCWSTNQLTNQLKNLDANGIDLIQKMLIYDPVHRISAKDILEHPYFNGFQSGLVRN.

In terms of domain architecture, Protein kinase spans 4-287 (FEKIEKIGEG…AKDILEHPYF (284 aa)). ATP contacts are provided by residues 10-18 (IGEGTYGVV) and Lys-33. Phosphothreonine is present on Thr-14. Tyr-15 carries the post-translational modification Phosphotyrosine. Residue Asp-128 is the Proton acceptor of the active site. The residue at position 160 (Tyr-160) is a Phosphotyrosine. Thr-161 carries the phosphothreonine; by CAK modification.

This sequence belongs to the protein kinase superfamily. CMGC Ser/Thr protein kinase family. CDC2/CDKX subfamily. Forms a stable but non-covalent complex with a regulatory subunit and with a cyclin. Component of the Frs-CycA-Cdk1 complex composed of Cdk1, CycA and Z600.

The protein resides in the nucleus. The enzyme catalyses L-seryl-[protein] + ATP = O-phospho-L-seryl-[protein] + ADP + H(+). The catalysed reaction is L-threonyl-[protein] + ATP = O-phospho-L-threonyl-[protein] + ADP + H(+). It catalyses the reaction [DNA-directed RNA polymerase] + ATP = phospho-[DNA-directed RNA polymerase] + ADP + H(+). Its activity is regulated as follows. Phosphorylation at Thr-14 or Tyr-15 inactivates the enzyme, while phosphorylation at Thr-161 activates it. In terms of biological role, plays a key role in the control of the eukaryotic cell cycle. Required for entry into S-phase and mitosis. In embryos, promotes the release of Rif1 from chromatin during mid-blastula transition. p34 is a component of the kinase complex that phosphorylates the repetitive C-terminus of RNA polymerase II. The protein is Cyclin-dependent kinase 1 of Drosophila melanogaster (Fruit fly).